Here is a 92-residue protein sequence, read N- to C-terminus: Conotoxin Cal22f (92 aa).

The first 24 residues, 1–24 (MMSTKGITLFLCLLLLALATSVNG), serve as a signal peptide directing secretion. Positions 25–44 (GQGTRRSRMTRALHGGRPSA) are excised as a propeptide.

In terms of processing, contains 4 disulfide bonds. Expressed by the venom duct.

The protein localises to the secreted. Its function is as follows. Probable neurotoxin with unknown target. Possibly targets ion channels. The chain is Conotoxin Cal22f from Californiconus californicus (California cone).